The primary structure comprises 118 residues: Small ribosomal subunit protein uS13 (118 aa).

A disordered region spans residues 94–118; sequence GLPVHGQRTKTNARTRKGPAKSITR.

This sequence belongs to the universal ribosomal protein uS13 family. In terms of assembly, part of the 30S ribosomal subunit. Forms a loose heterodimer with protein S19. Forms two bridges to the 50S subunit in the 70S ribosome.

In terms of biological role, located at the top of the head of the 30S subunit, it contacts several helices of the 16S rRNA. In the 70S ribosome it contacts the 23S rRNA (bridge B1a) and protein L5 of the 50S subunit (bridge B1b), connecting the 2 subunits; these bridges are implicated in subunit movement. Contacts the tRNAs in the A and P-sites. The polypeptide is Small ribosomal subunit protein uS13 (Acidithiobacillus ferrooxidans (strain ATCC 23270 / DSM 14882 / CIP 104768 / NCIMB 8455) (Ferrobacillus ferrooxidans (strain ATCC 23270))).